Reading from the N-terminus, the 78-residue chain is Lantibiotic cinnamycin (78 aa).

A propeptide spanning residues 1 to 59 (MTASILQQSVVDADFRAALLENPAAFGASAAALPTPVEAQDQASLDFWTKDIAATEAFA) is cleaved from the precursor. 2 cross-links (beta-methyllanthionine (Cys-Thr)) span residues 60–77 (CRQS…DGNT) and 64–70 (CSFGPFT). The segment at residues 63 to 73 (SCSFGPFTFVC) is a cross-link (lanthionine (Ser-Cys)). Positions 65–78 (SFGPFTFVCDGNTK) form a cross-link, lysinoalanine (Ser-Lys). At aspartate 74 the chain carries (3R)-3-hydroxyaspartate.

The protein belongs to the type B lantibiotic family. Maturation of lantibiotics involves the enzymatic conversion of Thr, and Ser into dehydrated AA and the formation of thioether bonds with cysteine or the formation of dialkylamine bonds with lysine. This is followed by membrane translocation and cleavage of the modified precursor.

Functionally, can act as inhibitor of the enzyme phospholipase A2, and of the angiotensin-converting enzyme. Shows inhibitory activities against herpes simplex virus and immunopotentiating activities. Its antimicrobial activities are not very pronounced. The sequence is that of Lantibiotic cinnamycin (cinA) from Streptomyces griseoverticillatus (Streptoverticillium griseoverticillatum).